Here is a 140-residue protein sequence, read N- to C-terminus: Nucleoside diphosphate kinase (140 aa).

ATP is bound by residues lysine 11, phenylalanine 59, arginine 87, threonine 93, arginine 104, and asparagine 114. Catalysis depends on histidine 117, which acts as the Pros-phosphohistidine intermediate.

The protein belongs to the NDK family. As to quaternary structure, homotetramer. The cofactor is Mg(2+).

The protein localises to the cytoplasm. It carries out the reaction a 2'-deoxyribonucleoside 5'-diphosphate + ATP = a 2'-deoxyribonucleoside 5'-triphosphate + ADP. The catalysed reaction is a ribonucleoside 5'-diphosphate + ATP = a ribonucleoside 5'-triphosphate + ADP. Functionally, major role in the synthesis of nucleoside triphosphates other than ATP. The ATP gamma phosphate is transferred to the NDP beta phosphate via a ping-pong mechanism, using a phosphorylated active-site intermediate. This Ruegeria sp. (strain TM1040) (Silicibacter sp.) protein is Nucleoside diphosphate kinase.